A 151-amino-acid chain; its full sequence is Putative pre-16S rRNA nuclease (151 aa).

It belongs to the YqgF nuclease family.

It localises to the cytoplasm. Functionally, could be a nuclease involved in processing of the 5'-end of pre-16S rRNA. This is Putative pre-16S rRNA nuclease from Neisseria gonorrhoeae (strain ATCC 700825 / FA 1090).